The following is a 307-amino-acid chain: Solute carrier family 25 member 53 (307 aa).

The segment at 1–23 is disordered; sequence MGEQNHSPGKELQHRTRAEAPGK. The segment covering 8–22 has biased composition (basic and acidic residues); the sequence is PGKELQHRTRAEAPG. 3 Solcar repeats span residues 25-105, 112-202, and 210-302; these read SWHS…LLCF, HTLG…IQDG, and HWVP…HSRK. Helical transmembrane passes span 31–51, 82–102, 112–132, 181–201, 215–235, and 269–290; these read YALG…IYKV, YPPL…YDSL, HTLG…AVAL, VLAR…PIQD, LVSG…LIVL, and IYRG…TTAI.

It belongs to the mitochondrial carrier (TC 2.A.29) family.

It localises to the mitochondrion inner membrane. The polypeptide is Solute carrier family 25 member 53 (SLC25A53) (Homo sapiens (Human)).